A 182-amino-acid polypeptide reads, in one-letter code: Bifunctional protein PyrR (182 aa).

The short motif at 97–109 is the PRPP-binding element; the sequence is VVLVDDVIFRGRT.

This sequence belongs to the purine/pyrimidine phosphoribosyltransferase family. PyrR subfamily.

The catalysed reaction is UMP + diphosphate = 5-phospho-alpha-D-ribose 1-diphosphate + uracil. Its function is as follows. Regulates the transcription of the pyrimidine nucleotide (pyr) operon in response to exogenous pyrimidines. In terms of biological role, also displays a weak uracil phosphoribosyltransferase activity which is not physiologically significant. In Synechococcus sp. (strain JA-2-3B'a(2-13)) (Cyanobacteria bacterium Yellowstone B-Prime), this protein is Bifunctional protein PyrR.